We begin with the raw amino-acid sequence, 1084 residues long: Siderophore biosynthesis regulatory protein URBS1 (1084 aa).

3 disordered regions span residues 1-164 (MALP…QSSS), 245-283 (AEEHAKMQRYSDEHPRAMNPTSRASYEHESRGMPYRDSY), and 300-337 (RPVHHADSSTNSPQYVPGDVYEHEGSGSPPAAHHAGMR). The segment covering 23-51 (QAAAASSSSSSSSSHHPPPRIAARPIAPA) has biased composition (low complexity). 2 stretches are compositionally biased toward polar residues: residues 97 to 106 (SHHNASSTAT) and 128 to 141 (RSQSPIAAFRNRSQ). Positions 150–164 (PSRSQPNSPLLQSSS) are enriched in low complexity. A compositionally biased stretch (basic and acidic residues) spans 245-260 (AEEHAKMQRYSDEHPR). The GATA-type 1 zinc-finger motif lies at 338–362 (CSNCGVTSTPLWRRAPDGSTICNAC). 2 disordered regions span residues 372-405 (HRSASNRLSGSDASPPTHEAKLAAAGPSCSREDD) and 442-472 (VSKRESQTSEDPPPARTAERAPPVAEEKMDD). Positions 373–385 (RSASNRLSGSDAS) are enriched in polar residues. The GATA-type 2 zinc finger occupies 482–506 (CTNCQTTTTPLWRRDEDGNNICNAC). 6 disordered regions span residues 559-595 (IAPAAGRNAGDSTPKSTESRRASKKSSLTSEQAMREA), 643-679 (RAGADTARTSHPDDSRSSKRPRQSYPLAPREAYDERD), 692-803 (THAA…TKLS), 841-940 (EAAG…SRRN), 953-1019 (AAVP…DDHW), and 1040-1084 (ARPV…APRT). 2 stretches are compositionally biased toward basic and acidic residues: residues 650–659 (RTSHPDDSRS) and 715–725 (RLGRSELHGES). The span at 752–781 (PHHHHHHHHHHANHASHAVHHGHHHHHHHP) shows a compositional bias: basic residues. The span at 875-888 (RGTRSGHDSIKQEA) shows a compositional bias: basic and acidic residues. Polar residues predominate over residues 961–970 (SPPSTVSNPA). The span at 1070 to 1084 (PVASSPSQAVSAPRT) shows a compositional bias: low complexity.

Its subcellular location is the nucleus. Its function is as follows. Involved in the regulation of secreted ferrichrome-type siderophores. Acts directly or indirectly to repress the biosynthesis of siderophores. This chain is Siderophore biosynthesis regulatory protein URBS1 (URBS1), found in Mycosarcoma maydis (Corn smut fungus).